Here is a 567-residue protein sequence, read N- to C-terminus: 2-succinyl-5-enolpyruvyl-6-hydroxy-3-cyclohexene-1-carboxylate synthase (567 aa).

It belongs to the TPP enzyme family. MenD subfamily. As to quaternary structure, homodimer. The cofactor is Mg(2+). Mn(2+) serves as cofactor. Thiamine diphosphate is required as a cofactor.

The enzyme catalyses isochorismate + 2-oxoglutarate + H(+) = 5-enolpyruvoyl-6-hydroxy-2-succinyl-cyclohex-3-ene-1-carboxylate + CO2. The protein operates within quinol/quinone metabolism; 1,4-dihydroxy-2-naphthoate biosynthesis; 1,4-dihydroxy-2-naphthoate from chorismate: step 2/7. It functions in the pathway quinol/quinone metabolism; menaquinone biosynthesis. Functionally, catalyzes the thiamine diphosphate-dependent decarboxylation of 2-oxoglutarate and the subsequent addition of the resulting succinic semialdehyde-thiamine pyrophosphate anion to isochorismate to yield 2-succinyl-5-enolpyruvyl-6-hydroxy-3-cyclohexene-1-carboxylate (SEPHCHC). This is 2-succinyl-5-enolpyruvyl-6-hydroxy-3-cyclohexene-1-carboxylate synthase from Yersinia pseudotuberculosis serotype O:1b (strain IP 31758).